Here is a 512-residue protein sequence, read N- to C-terminus: ATP synthase subunit alpha (512 aa).

Position 169 to 176 (169 to 176 (GDRQTGKT)) interacts with ATP.

Belongs to the ATPase alpha/beta chains family. As to quaternary structure, F-type ATPases have 2 components, CF(1) - the catalytic core - and CF(0) - the membrane proton channel. CF(1) has five subunits: alpha(3), beta(3), gamma(1), delta(1), epsilon(1). CF(0) has three main subunits: a(1), b(2) and c(9-12). The alpha and beta chains form an alternating ring which encloses part of the gamma chain. CF(1) is attached to CF(0) by a central stalk formed by the gamma and epsilon chains, while a peripheral stalk is formed by the delta and b chains.

The protein resides in the cell membrane. The enzyme catalyses ATP + H2O + 4 H(+)(in) = ADP + phosphate + 5 H(+)(out). Functionally, produces ATP from ADP in the presence of a proton gradient across the membrane. The alpha chain is a regulatory subunit. This Buchnera aphidicola subsp. Acyrthosiphon pisum (strain 5A) protein is ATP synthase subunit alpha.